A 389-amino-acid polypeptide reads, in one-letter code: MVTVEEVRKAQRAEGPATILAIGTATPANCILQSEYPDYYFRITNSEHKTELKEKFKRMCDKSMIRKRYMHLTEEILKENPNLCAYEAPSLDARQDMVVVEVPKLGKEAATKAIKEWGQPKSKITHVVFCTTSGVDMPGADYQLTKLLGLRPSVKRLMMYQQGCFAGGTVLRVAKDLAENNKGARVLVVCSEITAVTFRGPNDTHLDSLVGQALFGDGSAALIIGADPIPEIEKPTFELVSAAQTILPDSDGAIDGHLREVGLTFHLLKDVPGLISKNIEKSLVEAFKPLGISDWNSLFWIAHPGGPAILDQVESKLALKPEKLRATRHVLGEYGNMSSACVLFILDEMRRKCAEDGLKTTGEGLEWGVLFGFGPGLTVETVVLHSVGI.

C164 is an active-site residue.

Belongs to the thiolase-like superfamily. Chalcone/stilbene synthases family.

The protein localises to the cytoplasm. The enzyme catalyses (E)-4-coumaroyl-CoA + 3 malonyl-CoA + 3 H(+) = 2',4,4',6'-tetrahydroxychalcone + 3 CO2 + 4 CoA. Its pathway is secondary metabolite biosynthesis; flavonoid biosynthesis. Involved in the biosynthesis of prenylated phenolics natural products which contribute to the bitter taste of beer and display broad biological activities. Chalcone synthase that can use 4-coumaroyl-CoA to produce 4,2',4',6'-tetrahydroxychalcone (also termed naringenin-chalcone or chalcone) which can, under specific conditions, spontaneously isomerize into naringenin. In Humulus lupulus (European hop), this protein is Chalcone synthase H2.